Here is a 147-residue protein sequence, read N- to C-terminus: Plasminogen receptor (KT) (147 aa).

Over 1-52 the chain is Extracellular; sequence MGFIFSKSMNENMKNQQEFMVMHARLQLERQLIMQNEMRERQMAMQIAWSRE. Residues 53–73 form a helical membrane-spanning segment; the sequence is FLKYFGTFFGIATISLAAGAI. Topologically, residues 74–78 are cytoplasmic; it reads KRKKP. A helical transmembrane segment spans residues 79 to 99; sequence AFLIPIVPLSFIFTYQYDLGY. Residues 100–147 are Extracellular-facing; the sequence is GTLLQRMKSEAEDILETEKTKLELPKGLITFESLEKARREQSKFFSDK.

In terms of assembly, interacts with PLAT. Interacts with PLAUR. Expressed in adrenal medulla (pheochromocytoma).

It is found in the cell membrane. Functionally, receptor for plasminogen. Regulates urokinase plasminogen activator-dependent and stimulates tissue-type plasminogen activator-dependent cell surface plasminogen activation. Proposed to be part of a local catecholaminergic cell plasminogen activation system that regulates neuroendocrine prohormone processing. Involved in regulation of inflammatory response; regulates monocyte chemotactic migration and matrix metalloproteinase activation, such as of MMP2 and MMP9. The polypeptide is Plasminogen receptor (KT) (Plgrkt) (Rattus norvegicus (Rat)).